We begin with the raw amino-acid sequence, 60 residues long: MARLKVTQINSGIGRKQNQRETLRSLGLHKIGQSVVKDDKPEFRGMVNTVSHLVTVEEVD.

Belongs to the universal ribosomal protein uL30 family. As to quaternary structure, part of the 50S ribosomal subunit.

This is Large ribosomal subunit protein uL30 from Kineococcus radiotolerans (strain ATCC BAA-149 / DSM 14245 / SRS30216).